A 684-amino-acid chain; its full sequence is MTRKILVTSALPYANGSIHLGHMVEHIQTDVWVRFQKLRGHECYYCCADDTHGTPVMLAAQKQGIAPEDMIAKVRKEHLADFTGFFIGYDNYYSTHSTENKQFSQDIYRALKANGKIESRVIEQLFDPEKQMFLPDRFVKGECPKCHAQDQYGDNCEVCGTTYSPTELINPYSAVSGAKPELRESEHFFFKLGECADFLKAWTSGNNPHDGKPHLQPEALNKMKEWLGEGEETTLSDWDISRDAPYFGFEIPDAPGKYFYVWLDAPVGYMASFKNLCDRIGIDFDEYFKADSQTEMYHFIGKDILYFHALFWPAMLHFSGHRAPTGVYAHGFLTVDGQKMSKSRGTFITAKSYLEQGLNPEWMRYYIAAKLNGKIEDTDLNLQDFISRVNSDLVGKYVNIAARASGFIAKRFEGRPKDVSGSALLAKLAAESDTIAEQYENREYARALRDIMALADIVNEYVDANKPWELAKQEGQDERLHEVCSELINAFTMLTAYLAPVLPQTAANAARFLNLDAITWKNTRETLGEHAINKYEHLMQRVEQKQVDDLIEANKQSIQTASAPVEEGKYEKVAEQAGFDDFMKIDMRVAKVLNCEAVEGSTKLLKFDLDFGFEKRIIFSGIAASYPNPAELNGRMVIAVANFAPRKMAKFGVSEGMILSAATADGKLKLLDVDAGAQPGDKVG.

A 'HIGH' region motif is present at residues 12 to 22 (PYANGSIHLGH). 4 residues coordinate Zn(2+): cysteine 143, cysteine 146, cysteine 156, and cysteine 159. A 'KMSKS' region motif is present at residues 339–343 (KMSKS). Residue lysine 342 participates in ATP binding. Residues 581-684 (DFMKIDMRVA…AGAQPGDKVG (104 aa)) enclose the tRNA-binding domain.

It belongs to the class-I aminoacyl-tRNA synthetase family. MetG type 1 subfamily. Homodimer. The cofactor is Zn(2+).

It localises to the cytoplasm. It carries out the reaction tRNA(Met) + L-methionine + ATP = L-methionyl-tRNA(Met) + AMP + diphosphate. Is required not only for elongation of protein synthesis but also for the initiation of all mRNA translation through initiator tRNA(fMet) aminoacylation. The chain is Methionine--tRNA ligase from Neisseria gonorrhoeae (strain ATCC 700825 / FA 1090).